The chain runs to 307 residues: Ribonuclease Z (307 aa).

Zn(2+) contacts are provided by His63, His65, Asp67, His68, His141, Asp212, and His270. The active-site Proton acceptor is Asp67.

Belongs to the RNase Z family. In terms of assembly, homodimer. The cofactor is Zn(2+).

It catalyses the reaction Endonucleolytic cleavage of RNA, removing extra 3' nucleotides from tRNA precursor, generating 3' termini of tRNAs. A 3'-hydroxy group is left at the tRNA terminus and a 5'-phosphoryl group is left at the trailer molecule.. Zinc phosphodiesterase, which displays some tRNA 3'-processing endonuclease activity. Probably involved in tRNA maturation, by removing a 3'-trailer from precursor tRNA. This chain is Ribonuclease Z, found in Bacillus anthracis (strain A0248).